The sequence spans 597 residues: Sialic acid-binding Ig-like lectin 12 (597 aa).

Residues 1–20 (MLLLLLLLLLPPLLCGRVGA) form the signal peptide. Ig-like V-type domains are found at residues 21–144 (KEQK…VNVT) and 145–271 (ASQD…VHVT). Over 21–483 (KEQKDYLLTM…RPISGVTLGA (463 aa)) the chain is Extracellular. Residues Cys-46 and Cys-106 are joined by a disulfide bond. Residues Asn-142, Asn-181, Asn-232, and Asn-292 are each glycosylated (N-linked (GlcNAc...) asparagine). Intrachain disulfides connect Cys-168/Cys-301, Cys-173/Cys-233, and Cys-295/Cys-344. The region spanning 277–360 (PTFSIPGTLE…AGVTTTRAVR (84 aa)) is the Ig-like C2-type 1 domain. N-linked (GlcNAc...) asparagine glycosylation is found at Asn-362, Asn-369, and Asn-387. An Ig-like C2-type 2 domain is found at 367-464 (PQNLTMTVFQ…GSQHISLSLS (98 aa)). Cysteines 403 and 448 form a disulfide. A helical transmembrane segment spans residues 484-504 (VGGAGATALVFLSFCIIFVVV). The Cytoplasmic segment spans residues 505–597 (RSCRKKSARP…YEYSEINILK (93 aa)). The segment at 514–558 (PAVGVGDTGMEDTNAVRGSASQGPLIESPADDSPPHHAPPALATP) is disordered. Positions 565 to 570 (IQYASL) match the ITIM motif motif. A phosphotyrosine mark is found at Tyr-567 and Tyr-590. Residues 588–593 (YEYSEI) carry the SLAM-like motif motif.

The protein belongs to the immunoglobulin superfamily. SIGLEC (sialic acid binding Ig-like lectin) family.

It is found in the membrane. In terms of biological role, putative adhesion molecule that mediates sialic-acid dependent binding to cells. The sialic acid recognition site may be masked by cis interactions with sialic acids on the same cell surface. In Pan troglodytes (Chimpanzee), this protein is Sialic acid-binding Ig-like lectin 12 (SIGLEC12).